Consider the following 229-residue polypeptide: 2-C-methyl-D-erythritol 4-phosphate cytidylyltransferase (229 aa).

This sequence belongs to the IspD/TarI cytidylyltransferase family. IspD subfamily.

It catalyses the reaction 2-C-methyl-D-erythritol 4-phosphate + CTP + H(+) = 4-CDP-2-C-methyl-D-erythritol + diphosphate. It participates in isoprenoid biosynthesis; isopentenyl diphosphate biosynthesis via DXP pathway; isopentenyl diphosphate from 1-deoxy-D-xylulose 5-phosphate: step 2/6. In terms of biological role, catalyzes the formation of 4-diphosphocytidyl-2-C-methyl-D-erythritol from CTP and 2-C-methyl-D-erythritol 4-phosphate (MEP). This chain is 2-C-methyl-D-erythritol 4-phosphate cytidylyltransferase, found in Clostridium botulinum (strain Langeland / NCTC 10281 / Type F).